A 283-amino-acid chain; its full sequence is 32 kDa beta-galactoside-binding lectin (283 aa).

Galectin domains are found at residues 17–148 (YRSL…VHWG) and 156–283 (YESG…IQIQ). 217–223 (WGNEERE) is a binding site for a beta-D-galactoside.

(Microbial infection) Interacts (via domain galectin 2) with goat TMEM147. Interacts (via domain galectin 1) with goat TMEM63A.

Its subcellular location is the membrane. Functionally, binds galactose. Exerts immunomodulatory effects on host peripheral blood mononuclear cells to down-regulate host immune response. Hemagglutinates human, dog, rabbit, chicken and mouse erythrocytes but does not hemagglutinate the erythrocytes of goat, its natural host. In Haemonchus contortus (Barber pole worm), this protein is 32 kDa beta-galactoside-binding lectin (GAL-1).